The following is a 407-amino-acid chain: GTPase Obg (407 aa).

The Obg domain maps to 1-159; the sequence is MKFVDEVSIR…RDLKLELKVL (159 aa). Residues 127–149 are disordered; that stretch reads NTRFKSSTNRAPRQTTPGKPGDQ. Residues 129 to 143 are compositionally biased toward polar residues; sequence RFKSSTNRAPRQTTP. The OBG-type G domain maps to 160–333; sequence ADVGLLGLPN…LTRDIMRYLE (174 aa). Residues 166 to 173, 191 to 195, 213 to 216, 283 to 286, and 314 to 316 contribute to the GTP site; these read GLPNAGKS, FTTLV, DIPG, NKCD, and SAI. The Mg(2+) site is built by Ser-173 and Thr-193. The segment at 376–407 is disordered; sequence SGVKSVHDIGDDDWDEEDVDDEDGPEIIYVRD. A compositionally biased stretch (acidic residues) spans 385 to 400; sequence GDDDWDEEDVDDEDGP.

The protein belongs to the TRAFAC class OBG-HflX-like GTPase superfamily. OBG GTPase family. As to quaternary structure, monomer. Requires Mg(2+) as cofactor.

Its subcellular location is the cytoplasm. Its function is as follows. An essential GTPase which binds GTP, GDP and possibly (p)ppGpp with moderate affinity, with high nucleotide exchange rates and a fairly low GTP hydrolysis rate. Plays a role in control of the cell cycle, stress response, ribosome biogenesis and in those bacteria that undergo differentiation, in morphogenesis control. In Pseudomonas savastanoi pv. phaseolicola (strain 1448A / Race 6) (Pseudomonas syringae pv. phaseolicola (strain 1448A / Race 6)), this protein is GTPase Obg.